Consider the following 198-residue polypeptide: C4b-binding protein beta chain (198 aa).

Residues 1–17 form the signal peptide; that stretch reads MFFWLMCYLVDVWLISA. One can recognise a Sushi 1; atypical; lacks a Cys domain in the interval 22-77; sequence HCPDPLLVTDEFSSLEPVNVNDTFMFKCNEHCIFKGSNWSQCRENHTRVTHSPVSK. Residues N42, N59, and N66 are each glycosylated (N-linked (GlcNAc...) asparagine). A Sushi 2 domain is found at 79-135; the sequence is RDCGPPETPTHGYFEGRDFKSGSTITYYCEARYRLVGTQHQQCIDGEWTSAPPICEL. 2 disulfides stabilise this stretch: C81-C121 and C107-C133.

Disulfide-linked complex of alpha and beta chains.

It is found in the secreted. In terms of biological role, controls the classical pathway of complement activation. It binds as a cofactor to C3b/C4b inactivator (C3bINA), which then hydrolyzes the complement fragment C4b. It also accelerates the degradation of the C4bC2a complex (C3 convertase) by dissociating the complement fragment C2a. It also interacts with serum amyloid P component. This Bos taurus (Bovine) protein is C4b-binding protein beta chain (C4BPB).